The sequence spans 468 residues: Acid phosphatase PHO1 (468 aa).

The first 22 residues, 1 to 22, serve as a signal peptide directing secretion; the sequence is MFSPILSLEIILALATLQSVFA. The Nucleophile role is filled by H84. N-linked (GlcNAc...) asparagine glycosylation is found at N163, N196, N256, and N321. D346 serves as the catalytic Proton donor. N-linked (GlcNAc...) asparagine glycans are attached at residues N360 and N453.

This sequence belongs to the histidine acid phosphatase family.

It catalyses the reaction a phosphate monoester + H2O = an alcohol + phosphate. The chain is Acid phosphatase PHO1 (PHO1) from Komagataella pastoris (Yeast).